The primary structure comprises 208 residues: High frequency lysogenization protein HflD homolog (208 aa).

This sequence belongs to the HflD family.

The protein resides in the cytoplasm. It localises to the cell inner membrane. The sequence is that of High frequency lysogenization protein HflD homolog from Yersinia enterocolitica serotype O:8 / biotype 1B (strain NCTC 13174 / 8081).